The primary structure comprises 567 residues: uncharacterized protein (567 aa).

Transmembrane regions (helical) follow at residues 20–40, 69–89, 95–115, 126–146, 168–188, and 528–548; these read FTILAFFYISSIFFLLCSGVL, SLETAWYLISAVAVFIASVFI, AYLTLLAITWIVLTITDVALI, ILLNILYNLFGAILLSLFMCL, IPLVSAIIIAILITAVIYLLF, and IFGSSIMDILKYIFGLGLLAI.

The protein resides in the cell membrane. This is an uncharacterized protein from Escherichia coli (strain K12).